We begin with the raw amino-acid sequence, 146 residues long: Large ribosomal subunit protein uL23m (146 aa).

Residues 108–138 form a disordered region; it reads PDLFPEKDPRSPEPLEEELPQQRQSSDLRCP. Basic and acidic residues predominate over residues 111 to 120; that stretch reads FPEKDPRSPE.

This sequence belongs to the universal ribosomal protein uL23 family. As to quaternary structure, component of the mitochondrial ribosome large subunit (39S) which comprises a 16S rRNA and about 50 distinct proteins.

Its subcellular location is the mitochondrion. This is Large ribosomal subunit protein uL23m (Mrpl23) from Mus musculus (Mouse).